A 143-amino-acid chain; its full sequence is Protein DSS4 (143 aa).

An MSS4 domain is found at 1-131 (MSKATCSFEG…TKNEERVLHL (131 aa)). Residues cysteine 6, cysteine 11, cysteine 104, and cysteine 107 each coordinate Zn(2+).

Belongs to the DSS4/MSS4 family.

In terms of biological role, guanine-nucleotide-releasing protein that acts on SEC4. Might play a general role in vesicular transport. This Saccharomyces cerevisiae (strain ATCC 204508 / S288c) (Baker's yeast) protein is Protein DSS4 (DSS4).